Here is a 734-residue protein sequence, read N- to C-terminus: Photosystem I P700 chlorophyll a apoprotein A2 (734 aa).

8 helical membrane passes run Ile46–Ala69, Leu135–Gln158, Leu175–Ile199, Ile273–Tyr291, Ile330–Tyr353, Ala369–Ile395, Ala417–His439, and Phe517–Val535. [4Fe-4S] cluster contacts are provided by Cys559 and Cys568. 2 consecutive transmembrane segments (helical) span residues Ala575–Trp596 and Leu643–Ile665. Residues His654, Met662, and Tyr670 each contribute to the chlorophyll a site. Trp671 is a phylloquinone binding site. A helical membrane pass occupies residues Leu707 to Ala727.

The protein belongs to the PsaA/PsaB family. The PsaA/B heterodimer binds the P700 chlorophyll special pair and subsequent electron acceptors. PSI consists of a core antenna complex that captures photons, and an electron transfer chain that converts photonic excitation into a charge separation. The eukaryotic PSI reaction center is composed of at least 11 subunits. The cofactor is P700 is a chlorophyll a/chlorophyll a' dimer, A0 is one or more chlorophyll a, A1 is one or both phylloquinones and FX is a shared 4Fe-4S iron-sulfur center..

It is found in the plastid. The protein resides in the chloroplast thylakoid membrane. The enzyme catalyses reduced [plastocyanin] + hnu + oxidized [2Fe-2S]-[ferredoxin] = oxidized [plastocyanin] + reduced [2Fe-2S]-[ferredoxin]. Functionally, psaA and PsaB bind P700, the primary electron donor of photosystem I (PSI), as well as the electron acceptors A0, A1 and FX. PSI is a plastocyanin-ferredoxin oxidoreductase, converting photonic excitation into a charge separation, which transfers an electron from the donor P700 chlorophyll pair to the spectroscopically characterized acceptors A0, A1, FX, FA and FB in turn. Oxidized P700 is reduced on the lumenal side of the thylakoid membrane by plastocyanin. This is Photosystem I P700 chlorophyll a apoprotein A2 from Saccharum hybrid (Sugarcane).